Consider the following 346-residue polypeptide: Quinolinate synthase (346 aa).

Positions 47 and 68 each coordinate iminosuccinate. Cys113 provides a ligand contact to [4Fe-4S] cluster. Residues 139-141 (YAN) and Ser156 each bind iminosuccinate. Cys200 lines the [4Fe-4S] cluster pocket. Iminosuccinate is bound by residues 226-228 (HPE) and Thr243. Cys297 is a [4Fe-4S] cluster binding site.

It belongs to the quinolinate synthase family. Type 1 subfamily. The cofactor is [4Fe-4S] cluster.

It localises to the cytoplasm. It catalyses the reaction iminosuccinate + dihydroxyacetone phosphate = quinolinate + phosphate + 2 H2O + H(+). The protein operates within cofactor biosynthesis; NAD(+) biosynthesis; quinolinate from iminoaspartate: step 1/1. Its function is as follows. Catalyzes the condensation of iminoaspartate with dihydroxyacetone phosphate to form quinolinate. The sequence is that of Quinolinate synthase from Pseudoalteromonas translucida (strain TAC 125).